We begin with the raw amino-acid sequence, 439 residues long: Mitochondrial distribution and morphology protein 12 (439 aa).

Residues 1–439 (MSIDINWDTI…VYPSFWTFLV (439 aa)) enclose the SMP-LTD domain. Disordered stretches follow at residues 65 to 165 (PLPD…PGAL) and 229 to 284 (LTLT…HEKS). A compositionally biased stretch (acidic residues) spans 69 to 90 (FYEDDEDYPDEEGDEAENEAED). The span at 109–121 (PSRDSQSRERGRG) shows a compositional bias: basic and acidic residues. Polar residues predominate over residues 229–243 (LTLTPQSHPDPTSRP).

Belongs to the MDM12 family. Component of the ER-mitochondria encounter structure (ERMES) or MDM complex, composed of MMM1, MDM10, mdm12 and MDM34. An MMM1 homodimer associates with one molecule of mdm12 on each side in a pairwise head-to-tail manner, and the SMP-LTD domains of MMM1 and mdm12 generate a continuous hydrophobic tunnel for phospholipid trafficking.

The protein resides in the mitochondrion outer membrane. It localises to the endoplasmic reticulum membrane. Component of the ERMES/MDM complex, which serves as a molecular tether to connect the endoplasmic reticulum (ER) and mitochondria. Components of this complex are involved in the control of mitochondrial shape and protein biogenesis, and function in nonvesicular lipid trafficking between the ER and mitochondria. mdm12 is required for the interaction of the ER-resident membrane protein MMM1 and the outer mitochondrial membrane-resident beta-barrel protein MDM10. The mdm12-MMM1 subcomplex functions in the major beta-barrel assembly pathway that is responsible for biogenesis of all mitochondrial outer membrane beta-barrel proteins, and acts in a late step after the SAM complex. The MDM10-mdm12-MMM1 subcomplex further acts in the TOM40-specific pathway after the action of the mdm12-MMM1 complex. Essential for establishing and maintaining the structure of mitochondria and maintenance of mtDNA nucleoids. The chain is Mitochondrial distribution and morphology protein 12 from Pyrenophora tritici-repentis (strain Pt-1C-BFP) (Wheat tan spot fungus).